Consider the following 412-residue polypeptide: MAEEAKVDVKTSAKKDIRNYLCQYCGISRSKNYLITKHIQSHHQMELEEERDDEACEVDEESSSNHTCQECGAEFKKPAHLKQHMQSHSLERSFTCYVDDCAASYRRKDHLNRHLLTHKGKLFKCPKENCKSEFSVQGNVGRHVKKYHSNDNRDKDNTGLGDGDKDNTCKGDDDKEKSGSGGCEKENEGNGGSGKDNNGNGDSQPAECSTGQKQVVCKEIGCGKAFKYPSQLQKHQDSHVKLDSVEAFCSEPGCMKYFTNEECLKSHIRSCHQHINCEICGSKHLKKNIKRHLRTHDEDSSPGEIKCEVEGCSSTFSKASNLQKHMKAVHDDIRPFVCGFPGCGMRFAYKHVRNKHENSGYHVYTCGDFVETDEDFTSRPRGGLKRKQVTAEMLVRKRVMPPRFDAEEHETC.

The C2H2-type 1; degenerate zinc finger occupies 20 to 43 (YLCQYCGISRSKNYLITKHIQSHH). C2H2-type zinc fingers lie at residues 66 to 88 (HTCQECGAEFKKPAHLKQHMQSH), 94 to 118 (FTCYVDDCAASYRRKDHLNRHLLTH), and 123 to 148 (FKCPKENCKSEFSVQGNVGRHVKKYH). The segment at 144–207 (VKKYHSNDNR…NGNGDSQPAE (64 aa)) is disordered. The segment covering 148–188 (HSNDNRDKDNTGLGDGDKDNTCKGDDDKEKSGSGGCEKENE) has biased composition (basic and acidic residues). Lys185 participates in a covalent cross-link: Glycyl lysine isopeptide (Lys-Gly) (interchain with G-Cter in ubiquitin). Residues 215–239 (VVCKEIGCGKAFKYPSQLQKHQDSH) form a C2H2-type 5 zinc finger. The segment at 247-272 (AFCSEPGCMKYFTNEECLKSHIRSCH) adopts a C2H2-type 6; degenerate zinc-finger fold. The segment at 275-296 (INCEICGSKHLKKNIKRHLRTH) adopts a C2H2-type 7; degenerate zinc-finger fold. Residues 305–330 (IKCEVEGCSSTFSKASNLQKHMKAVH) form a C2H2-type 8 zinc finger. A C2H2-type 9; degenerate zinc finger spans residues 336 to 362 (FVCGFPGCGMRFAYKHVRNKHENSGYH). Positions 384–391 (LKRKQVTA) match the Nuclear localization signal motif.

Protein product TFIIIA (44 kDa) is proteolytically cleaved into TFIIIA-C (34 kDa). In terms of tissue distribution, expressed in seedlings, flowers, siliques and seeds.

The protein resides in the nucleus. It localises to the nucleolus. Essential protein. Isoform 1 is a transcription activator the binds both 5S rDNA and 5S rRNA and stimulates the transcription of 5S rRNA gene. Isoform 1 regulates 5S rRNA levels during development. This chain is Transcription factor IIIA, found in Arabidopsis thaliana (Mouse-ear cress).